We begin with the raw amino-acid sequence, 474 residues long: tRNA-2-methylthio-N(6)-dimethylallyladenosine synthase (474 aa).

The region spanning 3–120 is the MTTase N-terminal domain; it reads KKLHIKTWGC…LPDMIEQVRR (118 aa). [4Fe-4S] cluster-binding residues include Cys12, Cys49, Cys83, Cys157, Cys161, and Cys164. One can recognise a Radical SAM core domain in the interval 143-375; that stretch reads RAEGPTAFVS…QDRITQQAMR (233 aa). In terms of domain architecture, TRAM spans 378 to 441; it reads RHMMGTVQRI…TNSLRGKFIR (64 aa).

It belongs to the methylthiotransferase family. MiaB subfamily. As to quaternary structure, monomer. The cofactor is [4Fe-4S] cluster.

Its subcellular location is the cytoplasm. The enzyme catalyses N(6)-dimethylallyladenosine(37) in tRNA + (sulfur carrier)-SH + AH2 + 2 S-adenosyl-L-methionine = 2-methylsulfanyl-N(6)-dimethylallyladenosine(37) in tRNA + (sulfur carrier)-H + 5'-deoxyadenosine + L-methionine + A + S-adenosyl-L-homocysteine + 2 H(+). Its function is as follows. Catalyzes the methylthiolation of N6-(dimethylallyl)adenosine (i(6)A), leading to the formation of 2-methylthio-N6-(dimethylallyl)adenosine (ms(2)i(6)A) at position 37 in tRNAs that read codons beginning with uridine. The protein is tRNA-2-methylthio-N(6)-dimethylallyladenosine synthase of Shewanella sp. (strain MR-4).